We begin with the raw amino-acid sequence, 339 residues long: Anthranilate phosphoribosyltransferase (339 aa).

5-phospho-alpha-D-ribose 1-diphosphate is bound by residues Gly79, 82 to 83 (GD), Ser87, 89 to 92 (NIST), 107 to 115 (KHGNRSVSS), and Ser119. Gly79 lines the anthranilate pocket. Ser91 provides a ligand contact to Mg(2+). Asn110 serves as a coordination point for anthranilate. Arg165 contributes to the anthranilate binding site. Mg(2+) is bound by residues Asp224 and Glu225.

It belongs to the anthranilate phosphoribosyltransferase family. Homodimer. The cofactor is Mg(2+).

It carries out the reaction N-(5-phospho-beta-D-ribosyl)anthranilate + diphosphate = 5-phospho-alpha-D-ribose 1-diphosphate + anthranilate. The protein operates within amino-acid biosynthesis; L-tryptophan biosynthesis; L-tryptophan from chorismate: step 2/5. Catalyzes the transfer of the phosphoribosyl group of 5-phosphorylribose-1-pyrophosphate (PRPP) to anthranilate to yield N-(5'-phosphoribosyl)-anthranilate (PRA). The sequence is that of Anthranilate phosphoribosyltransferase from Exiguobacterium sibiricum (strain DSM 17290 / CCUG 55495 / CIP 109462 / JCM 13490 / 255-15).